Reading from the N-terminus, the 235-residue chain is Endonuclease V (235 aa).

Mg(2+)-binding residues include aspartate 47 and aspartate 117.

This sequence belongs to the endonuclease V family. Mg(2+) serves as cofactor.

Its subcellular location is the cytoplasm. It carries out the reaction Endonucleolytic cleavage at apurinic or apyrimidinic sites to products with a 5'-phosphate.. Its function is as follows. DNA repair enzyme involved in the repair of deaminated bases. Selectively cleaves double-stranded DNA at the second phosphodiester bond 3' to a deoxyinosine leaving behind the intact lesion on the nicked DNA. The polypeptide is Endonuclease V (Protochlamydia amoebophila (strain UWE25)).